The primary structure comprises 239 residues: MEEIRAWRHVFKLDPNKPIDDERLERLCESGTDAVIVGGTDGVTIDNVLDLLARIRRFSVPCALEVTDVEALTPGFDVYLVPIVLNSRQAEWIIGRHHEAVKQYGDMMNWDEIAAEGYCILNPECKAAKLTRADTELDVDDIVAYARLAEHLYKLPIFYLEYSGVYGDPSVVEKVKQALDQTQLFYGGGITTPEQAEHMARYADTVVVGNAIYDAFEQALATVAAVKQMAGQRNGDDGK.

Residue Lys12 coordinates sn-glycerol 1-phosphate. Mg(2+) contacts are provided by Asp14 and Thr40. Residues 159–164 (YLEYSG), Gly189, and 209–210 (GN) each bind sn-glycerol 1-phosphate.

It belongs to the GGGP/HepGP synthase family. Group I subfamily. In terms of assembly, homodimer. Requires Mg(2+) as cofactor.

The enzyme catalyses sn-glycerol 1-phosphate + all-trans-heptaprenyl diphosphate = 3-heptaprenyl-sn-glycero-1-phosphate + diphosphate. It participates in membrane lipid metabolism; glycerophospholipid metabolism. Its function is as follows. Prenyltransferase that catalyzes in vivo the transfer of the heptaprenyl moiety of heptaprenyl pyrophosphate (HepPP; 35 carbon atoms) to the C3 hydroxyl of sn-glycerol-1-phosphate (G1P), producing heptaprenylglyceryl phosphate (HepGP). This reaction is an ether-bond-formation step in the biosynthesis of archaea-type G1P-based membrane lipids found in Bacillales. To a much lesser extent, is also able to use geranylgeranyl diphosphate (GGPP; C20) as the prenyl donor. The sequence is that of Heptaprenylglyceryl phosphate synthase from Geobacillus kaustophilus (strain HTA426).